The following is a 128-amino-acid chain: Phosphoribosyl-AMP cyclohydrolase (128 aa).

D79 is a binding site for Mg(2+). C80 is a Zn(2+) binding site. Positions 81 and 83 each coordinate Mg(2+). Zn(2+) is bound by residues C97 and C104.

The protein belongs to the PRA-CH family. Homodimer. Mg(2+) serves as cofactor. The cofactor is Zn(2+).

It localises to the cytoplasm. It carries out the reaction 1-(5-phospho-beta-D-ribosyl)-5'-AMP + H2O = 1-(5-phospho-beta-D-ribosyl)-5-[(5-phospho-beta-D-ribosylamino)methylideneamino]imidazole-4-carboxamide. The protein operates within amino-acid biosynthesis; L-histidine biosynthesis; L-histidine from 5-phospho-alpha-D-ribose 1-diphosphate: step 3/9. Its function is as follows. Catalyzes the hydrolysis of the adenine ring of phosphoribosyl-AMP. The sequence is that of Phosphoribosyl-AMP cyclohydrolase from Saccharophagus degradans (strain 2-40 / ATCC 43961 / DSM 17024).